A 187-amino-acid chain; its full sequence is Cytochrome b-245 chaperone 1 (187 aa).

A helical membrane pass occupies residues 20–42; it reads GIRSWSLLVGILSTGLAAAYYSG. Residues 167–187 form a disordered region; sequence ESPSERSQSSDSEPDGPGGQS. A phosphoserine mark is found at serine 168 and serine 170.

The protein belongs to the CYBC1 family. Interacts with CYBB; CYBC1 may act as a chaperone stabilizing Cytochrome b-245 heterodimer.

It is found in the endoplasmic reticulum membrane. In terms of biological role, functions as a chaperone necessary for a stable expression of the CYBA and CYBB subunits of the cytochrome b-245 heterodimer. Controls the phagocyte respiratory burst and is essential for innate immunity. The polypeptide is Cytochrome b-245 chaperone 1 (Mus musculus (Mouse)).